Reading from the N-terminus, the 931-residue chain is Chitin synthase III (931 aa).

2 N-linked (GlcNAc...) asparagine glycosylation sites follow: Asn37 and Asn94. Residues 93–154 (PNASQLPPAG…PGGVGQAGGL (62 aa)) form a disordered region. Gly residues predominate over residues 102 to 122 (GSGGFGDNGFGQYGQPQGFGG). N-linked (GlcNAc...) asparagine glycosylation occurs at Asn558. The next 5 helical transmembrane spans lie at 585 to 605 (FFLH…WFSL), 644 to 664 (IINA…FILA), 677 to 697 (IASF…SGYL), 731 to 751 (VILI…FLYL), and 759 to 779 (SFPY…VYAF). Asn802 carries an N-linked (GlcNAc...) asparagine glycan. 2 helical membrane passes run 858–878 (TGLV…ITSD) and 899–919 (FLLY…LWFL).

The protein belongs to the chitin synthase family. Class III subfamily. As to expression, highly expressed in conidia and during appressorium formation.

It localises to the cell membrane. The enzyme catalyses [(1-&gt;4)-N-acetyl-beta-D-glucosaminyl](n) + UDP-N-acetyl-alpha-D-glucosamine = [(1-&gt;4)-N-acetyl-beta-D-glucosaminyl](n+1) + UDP + H(+). Its function is as follows. Polymerizes chitin, a structural polymer of the cell wall and septum, by transferring the sugar moiety of UDP-GlcNAc to the non-reducing end of the growing chitin polymer. Contributes to the production of conidia and the ability of fungal conidia to germinate. Involved in the fungal cell wall integrity and the ability of conidia to withstand biophysical pressure. Required for appressorium formation and evasion of insect cellular and/or humoral defenses, promoting the fungal dimorphic transition to the production of hyphal bodies that occurs within hosts, and ultimately to virulence. This Metarhizium acridum (strain CQMa 102) protein is Chitin synthase III.